The primary structure comprises 993 residues: Chromosome transmission fidelity protein 18 (993 aa).

Disordered stretches follow at residues 1-52 (MPFI…DHDG) and 65-107 (FEIQ…DGLE). 2 stretches are compositionally biased toward acidic residues: residues 42 to 51 (LDDDDDDDHD) and 97 to 106 (DNDDDDDDGL). An ATP-binding site is contributed by 321-328 (GPPGLGKT). Residues 887–915 (RKNSENLSSTGSKKSTTKSDDIETPANPA) are disordered.

Belongs to the activator 1 small subunits family. CTF18 subfamily.

The protein resides in the nucleus. In terms of biological role, essential for the fidelity of chromosome transmission. Required for the DNA replication block checkpoint. Replication factor C (RFC) complex has an essential but redundant activity in sister chromatid cohesion establishment. This is Chromosome transmission fidelity protein 18 (ctf18) from Emericella nidulans (strain FGSC A4 / ATCC 38163 / CBS 112.46 / NRRL 194 / M139) (Aspergillus nidulans).